A 253-amino-acid chain; its full sequence is Pimeloyl-[acyl-carrier protein] methyl ester esterase (253 aa).

Residues W18, 78–79 (SL), and 139–143 (FLALD) contribute to the substrate site. S78 acts as the Nucleophile in catalysis. Catalysis depends on residues D203 and H231. H231 lines the substrate pocket.

It belongs to the AB hydrolase superfamily. Carboxylesterase BioH family. Monomer.

The protein localises to the cytoplasm. The catalysed reaction is 6-carboxyhexanoyl-[ACP] methyl ester + H2O = 6-carboxyhexanoyl-[ACP] + methanol + H(+). The protein operates within cofactor biosynthesis; biotin biosynthesis. Its function is as follows. The physiological role of BioH is to remove the methyl group introduced by BioC when the pimeloyl moiety is complete. It allows to synthesize pimeloyl-ACP via the fatty acid synthetic pathway through the hydrolysis of the ester bonds of pimeloyl-ACP esters. This chain is Pimeloyl-[acyl-carrier protein] methyl ester esterase, found in Xanthomonas axonopodis pv. citri (strain 306).